The following is a 299-amino-acid chain: 4-diphosphocytidyl-2-C-methyl-D-erythritol kinase (299 aa).

Lysine 33 is a catalytic residue. Residue 115–125 participates in ATP binding; sequence PLASGLGGGSS. The active site involves aspartate 154.

Belongs to the GHMP kinase family. IspE subfamily.

The catalysed reaction is 4-CDP-2-C-methyl-D-erythritol + ATP = 4-CDP-2-C-methyl-D-erythritol 2-phosphate + ADP + H(+). It participates in isoprenoid biosynthesis; isopentenyl diphosphate biosynthesis via DXP pathway; isopentenyl diphosphate from 1-deoxy-D-xylulose 5-phosphate: step 3/6. In terms of biological role, catalyzes the phosphorylation of the position 2 hydroxy group of 4-diphosphocytidyl-2C-methyl-D-erythritol. The sequence is that of 4-diphosphocytidyl-2-C-methyl-D-erythritol kinase from Deinococcus geothermalis (strain DSM 11300 / CIP 105573 / AG-3a).